The chain runs to 208 residues: Large ribosomal subunit protein uL3 (208 aa).

The disordered stretch occupies residues Arg123–Val147.

This sequence belongs to the universal ribosomal protein uL3 family. Part of the 50S ribosomal subunit. Forms a cluster with proteins L14 and L19.

Functionally, one of the primary rRNA binding proteins, it binds directly near the 3'-end of the 23S rRNA, where it nucleates assembly of the 50S subunit. This is Large ribosomal subunit protein uL3 from Streptococcus uberis (strain ATCC BAA-854 / 0140J).